The sequence spans 170 residues: Photosystem II extrinsic protein V (170 aa).

A signal peptide spans 1–33; sequence MASLFASLGRSLIKLLIVLPVIIGLSISSPAMA. Positions 70, 73, 74, and 125 each coordinate heme c.

This sequence belongs to the cytochrome c family. PsbV subfamily. In terms of assembly, PSII is composed of 1 copy each of membrane proteins PsbA, PsbB, PsbC, PsbD, PsbE, PsbF, PsbH, PsbI, PsbJ, PsbK, PsbL, PsbM, PsbT, PsbX, PsbY, Psb30/Ycf12, peripheral proteins PsbO, CyanoQ (PsbQ), PsbU, PsbV and a large number of cofactors. It forms dimeric complexes. Heme c is required as a cofactor.

The protein resides in the cellular thylakoid membrane. Functionally, one of the extrinsic, lumenal subunits of photosystem II (PSII). PSII is a light-driven water plastoquinone oxidoreductase, using light energy to abstract electrons from H(2)O, generating a proton gradient subsequently used for ATP formation. The extrinsic proteins stabilize the structure of photosystem II oxygen-evolving complex (OEC), the ion environment of oxygen evolution and protect the OEC against heat-induced inactivation. Low-potential cytochrome c that plays a role in the OEC of PSII. This chain is Photosystem II extrinsic protein V, found in Prochlorococcus marinus (strain MIT 9303).